A 458-amino-acid chain; its full sequence is Methylenetetrahydrofolate--tRNA-(uracil-5-)-methyltransferase TrmFO (458 aa).

An FAD-binding site is contributed by 12–17; that stretch reads GAGLAG.

It belongs to the MnmG family. TrmFO subfamily. It depends on FAD as a cofactor.

It is found in the cytoplasm. The enzyme catalyses uridine(54) in tRNA + (6R)-5,10-methylene-5,6,7,8-tetrahydrofolate + NADH + H(+) = 5-methyluridine(54) in tRNA + (6S)-5,6,7,8-tetrahydrofolate + NAD(+). It carries out the reaction uridine(54) in tRNA + (6R)-5,10-methylene-5,6,7,8-tetrahydrofolate + NADPH + H(+) = 5-methyluridine(54) in tRNA + (6S)-5,6,7,8-tetrahydrofolate + NADP(+). Functionally, catalyzes the folate-dependent formation of 5-methyl-uridine at position 54 (M-5-U54) in all tRNAs. The sequence is that of Methylenetetrahydrofolate--tRNA-(uracil-5-)-methyltransferase TrmFO from Deinococcus geothermalis (strain DSM 11300 / CIP 105573 / AG-3a).